Here is a 435-residue protein sequence, read N- to C-terminus: Methylenetetrahydrofolate--tRNA-(uracil-5-)-methyltransferase TrmFO (435 aa).

7 to 12 (GAGLAG) contributes to the FAD binding site.

Belongs to the MnmG family. TrmFO subfamily. It depends on FAD as a cofactor.

The protein localises to the cytoplasm. The enzyme catalyses uridine(54) in tRNA + (6R)-5,10-methylene-5,6,7,8-tetrahydrofolate + NADH + H(+) = 5-methyluridine(54) in tRNA + (6S)-5,6,7,8-tetrahydrofolate + NAD(+). The catalysed reaction is uridine(54) in tRNA + (6R)-5,10-methylene-5,6,7,8-tetrahydrofolate + NADPH + H(+) = 5-methyluridine(54) in tRNA + (6S)-5,6,7,8-tetrahydrofolate + NADP(+). Catalyzes the folate-dependent formation of 5-methyl-uridine at position 54 (M-5-U54) in all tRNAs. The sequence is that of Methylenetetrahydrofolate--tRNA-(uracil-5-)-methyltransferase TrmFO from Thermotoga maritima (strain ATCC 43589 / DSM 3109 / JCM 10099 / NBRC 100826 / MSB8).